Reading from the N-terminus, the 608-residue chain is Epsin-3 (608 aa).

A 1,2-diacyl-sn-glycero-3-phospho-(1D-myo-inositol-4,5-bisphosphate) contacts are provided by Arg8, Lys11, Arg25, Asn30, Arg63, and His73. In terms of domain architecture, ENTH spans 12–144 (NIVHNYSEAE…KDEERLRQER (133 aa)). Disordered stretches follow at residues 150-266 (TKER…QSSI) and 281-475 (STHC…GPSA). Positions 174–189 (GSPSSYTSASSSPRYA) are enriched in low complexity. A phosphoserine mark is found at Ser184 and Ser185. Residues 202-221 (EEELQLQLALAMSREEAEKG) enclose the UIM domain. 2 stretches are compositionally biased toward basic and acidic residues: residues 214-229 (SREE…KGDD) and 240-260 (GQRR…EKLK). 7 consecutive repeat copies span residues 287–289 (DPW), 310–312 (DPW), 337–339 (EPW), 353–355 (DPW), 370–372 (DPW), 495–497 (NPF), and 508–510 (NPF). The 5 X 3 AA repeats of [DE]-P-W stretch occupies residues 287–372 (DPWDIPGLRP…KLPSTGVDPW (86 aa)). Residues 346–363 (PSGPPITDPWAPSSPTPK) are compositionally biased toward pro residues. Positions 495-607 (NPFLTGLSAP…LPPQAGTNPF (113 aa)) are 3 X 3 AA repeats of N-P-F. 2 disordered regions span residues 498–530 (LTGL…SPAL) and 575–608 (GAFA…NPFL). Pro residues predominate over residues 578-588 (APPPASLPQPL). Repeat 3 spans residues 605 to 607 (NPF).

The protein belongs to the epsin family.

It localises to the cytoplasm. It is found in the cell cortex. The protein localises to the perinuclear region. Its subcellular location is the cytoplasmic vesicle. The protein resides in the clathrin-coated vesicle. It localises to the nucleus. The sequence is that of Epsin-3 (Epn3) from Rattus norvegicus (Rat).